The chain runs to 316 residues: Protoheme IX farnesyltransferase (316 aa).

The next 9 membrane-spanning stretches (helical) occupy residues 32-52 (VMSL…GQIN), 53-73 (PVLG…SGAL), 93-113 (IPAG…LSCF), 116-136 (AILG…TIFF), 152-172 (NIVI…ACVT), 180-200 (TVLF…LALF), 226-246 (IVAY…LGFA), 248-268 (FAYG…SIAV), and 289-309 (IFYL…AMLV).

It belongs to the UbiA prenyltransferase family. Protoheme IX farnesyltransferase subfamily.

The protein localises to the cell inner membrane. It catalyses the reaction heme b + (2E,6E)-farnesyl diphosphate + H2O = Fe(II)-heme o + diphosphate. Its pathway is porphyrin-containing compound metabolism; heme O biosynthesis; heme O from protoheme: step 1/1. In terms of biological role, converts heme B (protoheme IX) to heme O by substitution of the vinyl group on carbon 2 of heme B porphyrin ring with a hydroxyethyl farnesyl side group. This Rhizobium etli (strain CIAT 652) protein is Protoheme IX farnesyltransferase.